A 472-amino-acid polypeptide reads, in one-letter code: Peptidoglycan endopeptidase RipA (472 aa).

Residues 1 to 39 (MRRNRRGSPARPAARFVRPAIPSALSVALLVCTPGLATA) constitute a signal peptide (tat-type signal). The NlpC/P60 domain maps to 340-472 (RQASEYVIRR…TPYVVRYIEY (133 aa)). The Nucleophile role is filled by C383. The Proton acceptor role is filled by H432. E444 is a catalytic residue.

This sequence belongs to the peptidase C40 family. Monomer. Interacts with RpfB and PBP1A (ponA1) via residues 448-472 of RipA, interacts with RpfE. Interacts with the chaperone MoxR1. RipA-MoxR1 interaction in the cytoplasm leads to proper folding of RipA, resulting in its secretion. Also interacts with Mce2B. Post-translationally, exported by the Tat system. The position of the signal peptide cleavage has not been experimentally proven.

The protein localises to the secreted. With respect to regulation, moxR1-mediated folding is critical for secretion via the TAT system. The synergistic effects on peptidoglycan degradation of RipA plus RpfB are inhibited by addition of PBP1A (ponA1). Functionally, peptidoglycan endopeptidase that cleaves the bond between D-glutamate and meso-diaminopimelate. Binds and degrades high-molecular weight peptidoglycan from a number of Actinobacteria; activity is increased in the presence of RpfB and inhibited by PBP1A (ponA1). Required for normal separation of daughter cells after cell division and for cell wall integrity. Required for host cell invasion and intracellular survival in host macrophages. In Mycobacterium tuberculosis (strain ATCC 25618 / H37Rv), this protein is Peptidoglycan endopeptidase RipA (ripA).